The primary structure comprises 456 residues: Serine/threonine-protein kinase PBS1 (456 aa).

Residues Met1 to Arg57 form a disordered region. Gly2 carries N-myristoyl glycine lipidation. Residues Cys3 and Cys6 are each lipidated (S-palmitoyl cysteine). Residues Asp12 to His23 are compositionally biased toward basic and acidic residues. Ser21 is modified (phosphoserine). Polar residues predominate over residues Lys27–Gly39. The region spanning Phe86–Leu363 is the Protein kinase domain. ATP contacts are provided by residues Leu92–Val100 and Lys115. Residue Tyr160 is modified to Phosphotyrosine. Asp213 serves as the catalytic Proton acceptor. Phosphoserine occurs at positions 217 and 247. A phosphothreonine mark is found at Thr248 and Thr253. Tyr261 carries the post-translational modification Phosphotyrosine. Positions Ser292–His296 match the Recognition motif required for RPS5-mediated plant resistance to P.syringae motif. A disordered region spans residues Tyr368 to Gly456. Composition is skewed to basic and acidic residues over residues Pro370 to Asp392 and Phe400 to Ala429. The span at Glu446–Gly456 shows a compositional bias: polar residues.

This sequence belongs to the protein kinase superfamily. Ser/Thr protein kinase family. As to quaternary structure, in infected plant cells, it interacts with the P.syringae virulence protein avrPphB. In uninfected plants, autophosphorylated form interacts with RPS5. Interacts with FLS2. Post-translationally, cleaved by avrPphB in infected plant cells. Its cleavage serves as a signal that triggers the RPS5-mediated defense system. Autophosphorylates. Autophosphorylation may be required to trigger the RPS5-mediated plant defense system. In terms of processing, palmitoylation at Cys-3 and Cys-6 are required for plasma membrane location that is essential for the RPS5-mediated plant defense response.

It is found in the cell membrane. It catalyses the reaction L-seryl-[protein] + ATP = O-phospho-L-seryl-[protein] + ADP + H(+). The enzyme catalyses L-threonyl-[protein] + ATP = O-phospho-L-threonyl-[protein] + ADP + H(+). Protein kinase required for plant defense mechanism mediated by the disease resistance (R) protein RPS5. In case of infection by Pseudomonas syringae, AvrPphB triggers RPS5-mediated defense mechanism via the cleavage of PBS1. Both kinase activity and cleavage by avrPphB are independently required to trigger the RPS5-mediated resistance. Contributes to PAMP-triggered immunity (PTI) signaling and defense responses downstream of FLS2. The polypeptide is Serine/threonine-protein kinase PBS1 (Arabidopsis thaliana (Mouse-ear cress)).